The following is a 414-amino-acid chain: Putative ankyrin repeat protein BB_B28 (414 aa).

ANK repeat units lie at residues 326–355 (NGNP…NINL) and 359–389 (NSQT…NPNI).

This chain is Putative ankyrin repeat protein BB_B28, found in Borreliella burgdorferi (strain ATCC 35210 / DSM 4680 / CIP 102532 / B31) (Borrelia burgdorferi).